The primary structure comprises 101 residues: CRISPR-associated endoribonuclease Cas2 (101 aa).

D8 serves as a coordination point for Mg(2+).

This sequence belongs to the CRISPR-associated endoribonuclease Cas2 protein family. In terms of assembly, homodimer, forms a heterotetramer with a Cas1 homodimer. The cofactor is Mg(2+).

Functionally, CRISPR (clustered regularly interspaced short palindromic repeat), is an adaptive immune system that provides protection against mobile genetic elements (viruses, transposable elements and conjugative plasmids). CRISPR clusters contain sequences complementary to antecedent mobile elements and target invading nucleic acids. CRISPR clusters are transcribed and processed into CRISPR RNA (crRNA). Functions as a ssRNA-specific endoribonuclease. Involved in the integration of spacer DNA into the CRISPR cassette. The polypeptide is CRISPR-associated endoribonuclease Cas2 (Ligilactobacillus salivarius (strain UCC118) (Lactobacillus salivarius)).